The primary structure comprises 95 residues: Co-chaperonin GroES (95 aa).

It belongs to the GroES chaperonin family. In terms of assembly, heptamer of 7 subunits arranged in a ring. Interacts with the chaperonin GroEL.

The protein localises to the cytoplasm. Its function is as follows. Together with the chaperonin GroEL, plays an essential role in assisting protein folding. The GroEL-GroES system forms a nano-cage that allows encapsulation of the non-native substrate proteins and provides a physical environment optimized to promote and accelerate protein folding. GroES binds to the apical surface of the GroEL ring, thereby capping the opening of the GroEL channel. This is Co-chaperonin GroES from Xanthomonas axonopodis pv. citri (strain 306).